The following is a 249-amino-acid chain: tRNA pseudouridine synthase A (249 aa).

D53 serves as the catalytic Nucleophile. Residue Y111 participates in substrate binding.

It belongs to the tRNA pseudouridine synthase TruA family. In terms of assembly, homodimer.

The catalysed reaction is uridine(38/39/40) in tRNA = pseudouridine(38/39/40) in tRNA. Formation of pseudouridine at positions 38, 39 and 40 in the anticodon stem and loop of transfer RNAs. This is tRNA pseudouridine synthase A from Streptococcus suis (strain 98HAH33).